Reading from the N-terminus, the 185-residue chain is Peptidyl-tRNA hydrolase (185 aa).

Tyr-14 serves as a coordination point for tRNA. Residue His-19 is the Proton acceptor of the active site. 3 residues coordinate tRNA: Phe-64, Asn-66, and Asn-112.

Belongs to the PTH family. Monomer.

It is found in the cytoplasm. It carries out the reaction an N-acyl-L-alpha-aminoacyl-tRNA + H2O = an N-acyl-L-amino acid + a tRNA + H(+). In terms of biological role, hydrolyzes ribosome-free peptidyl-tRNAs (with 1 or more amino acids incorporated), which drop off the ribosome during protein synthesis, or as a result of ribosome stalling. Its function is as follows. Catalyzes the release of premature peptidyl moieties from peptidyl-tRNA molecules trapped in stalled 50S ribosomal subunits, and thus maintains levels of free tRNAs and 50S ribosomes. This is Peptidyl-tRNA hydrolase from Lactobacillus gasseri (strain ATCC 33323 / DSM 20243 / BCRC 14619 / CIP 102991 / JCM 1131 / KCTC 3163 / NCIMB 11718 / NCTC 13722 / AM63).